The chain runs to 261 residues: Uridine-cytidine kinase 2 (261 aa).

The disordered stretch occupies residues 1–24; it reads MAGDSEQALPKHSPQNGQPFLIGV. Residue 26–34 participates in ATP binding; it reads GGTASGKSS. The substrate site is built by Asp-83, Tyr-111, His-116, Arg-165, Arg-175, and Gln-183. Asp-212 provides a ligand contact to ATP. Over residues 238–247 the composition is skewed to polar residues; sequence NGYTNGFTSP. Residues 238–261 form a disordered region; the sequence is NGYTNGFTSPRTRHPSDSNSSRPH.

Belongs to the uridine kinase family. In terms of assembly, homotetramer.

It catalyses the reaction uridine + ATP = UMP + ADP + H(+). The enzyme catalyses cytidine + ATP = CMP + ADP + H(+). The protein operates within pyrimidine metabolism; CTP biosynthesis via salvage pathway; CTP from cytidine: step 1/3. It participates in pyrimidine metabolism; UMP biosynthesis via salvage pathway; UMP from uridine: step 1/1. Its function is as follows. Phosphorylates uridine and cytidine to uridine monophosphate and cytidine monophosphate. Does not phosphorylate deoxyribonucleosides or purine ribonucleosides. Can use ATP or GTP as a phosphate donor. The polypeptide is Uridine-cytidine kinase 2 (uck2) (Xenopus tropicalis (Western clawed frog)).